The sequence spans 225 residues: Uracil-DNA glycosylase (225 aa).

D65 serves as the catalytic Proton acceptor.

This sequence belongs to the uracil-DNA glycosylase (UDG) superfamily. UNG family.

It localises to the cytoplasm. It catalyses the reaction Hydrolyzes single-stranded DNA or mismatched double-stranded DNA and polynucleotides, releasing free uracil.. Functionally, excises uracil residues from the DNA which can arise as a result of misincorporation of dUMP residues by DNA polymerase or due to deamination of cytosine. This is Uracil-DNA glycosylase from Bacillus anthracis (strain A0248).